Consider the following 275-residue polypeptide: Rhamnulose-1-phosphate aldolase (275 aa).

Residue glutamate 117 is part of the active site. Histidine 141, histidine 143, and histidine 212 together coordinate Zn(2+).

It belongs to the aldolase class II family. RhaD subfamily. As to quaternary structure, homotetramer. The cofactor is Zn(2+).

Its subcellular location is the cytoplasm. The catalysed reaction is L-rhamnulose 1-phosphate = (S)-lactaldehyde + dihydroxyacetone phosphate. Its pathway is carbohydrate degradation; L-rhamnose degradation; glycerone phosphate from L-rhamnose: step 3/3. Catalyzes the reversible cleavage of L-rhamnulose-1-phosphate to dihydroxyacetone phosphate (DHAP) and L-lactaldehyde. This chain is Rhamnulose-1-phosphate aldolase, found in Salmonella dublin (strain CT_02021853).